We begin with the raw amino-acid sequence, 250 residues long: Coproheme decarboxylase (250 aa).

Residues Arg-131, Tyr-145–Lys-149, His-172, and Gln-185 contribute to the Fe-coproporphyrin III site. The active site involves Tyr-145.

Belongs to the ChdC family. Type 1 subfamily. Fe-coproporphyrin III is required as a cofactor.

It catalyses the reaction Fe-coproporphyrin III + 2 H2O2 + 2 H(+) = heme b + 2 CO2 + 4 H2O. The enzyme catalyses Fe-coproporphyrin III + H2O2 + H(+) = harderoheme III + CO2 + 2 H2O. It carries out the reaction harderoheme III + H2O2 + H(+) = heme b + CO2 + 2 H2O. The protein operates within porphyrin-containing compound metabolism; protoheme biosynthesis. In terms of biological role, involved in coproporphyrin-dependent heme b biosynthesis. Catalyzes the decarboxylation of Fe-coproporphyrin III (coproheme) to heme b (protoheme IX), the last step of the pathway. The reaction occurs in a stepwise manner with a three-propionate intermediate. This is Coproheme decarboxylase from Staphylococcus aureus (strain Mu50 / ATCC 700699).